Here is a 433-residue protein sequence, read N- to C-terminus: Chaperone SurA (433 aa).

The signal sequence occupies residues 1–28 (MTAITRITLTGALLAAALLLAALQPARA). 2 PpiC domains span residues 174 to 277 (NQEY…KLMD) and 286 to 386 (VTET…QVTD).

The protein resides in the periplasm. It catalyses the reaction [protein]-peptidylproline (omega=180) = [protein]-peptidylproline (omega=0). Its function is as follows. Chaperone involved in the correct folding and assembly of outer membrane proteins. Recognizes specific patterns of aromatic residues and the orientation of their side chains, which are found more frequently in integral outer membrane proteins. May act in both early periplasmic and late outer membrane-associated steps of protein maturation. In Alkalilimnicola ehrlichii (strain ATCC BAA-1101 / DSM 17681 / MLHE-1), this protein is Chaperone SurA.